Here is a 161-residue protein sequence, read N- to C-terminus: Nucleotide-binding protein Vapar_3769 (161 aa).

The protein belongs to the YajQ family.

Functionally, nucleotide-binding protein. In Variovorax paradoxus (strain S110), this protein is Nucleotide-binding protein Vapar_3769.